Consider the following 205-residue polypeptide: DNA-directed RNA polymerases IV and V subunit 4 (205 aa).

The segment at 1-79 (MSEKGGKGLK…TKSSKNSLHS (79 aa)) is disordered. Over residues 48-60 (NVSSDQQPFQSSA) the composition is skewed to polar residues.

The protein belongs to the eukaryotic RPB4 RNA polymerase subunit family. In terms of assembly, component of the RNA polymerase IV and V complexes. Interacts with NRPD1 and NRPE1. As to expression, expressed in shoot meristematic region and in root tips. Detected in cotyledons, flowers and young leaves.

The protein resides in the nucleus. DNA-dependent RNA polymerase catalyzes the transcription of DNA into RNA using the four ribonucleoside triphosphates as substrates. Component of RNA polymerases IV and V which mediate short-interfering RNAs (siRNA) accumulation and subsequent RNA-directed DNA methylation-dependent (RdDM) transcriptional gene silencing (TGS) of endogenous repeated sequences, including transposable elements. Required for the de novo DNA methylation directed by the RdDM pathway. The chain is DNA-directed RNA polymerases IV and V subunit 4 (NRPD4) from Arabidopsis thaliana (Mouse-ear cress).